Here is a 450-residue protein sequence, read N- to C-terminus: D-inositol 3-phosphate glycosyltransferase (450 aa).

H21 serves as a coordination point for 1D-myo-inositol 3-phosphate. Residues 27-28 (QP) and G35 each bind UDP-N-acetyl-alpha-D-glucosamine. 1D-myo-inositol 3-phosphate is bound by residues 32-37 (DAGGMN), K90, Y123, T147, and R167. R241, K246, and V307 together coordinate UDP-N-acetyl-alpha-D-glucosamine. Mg(2+) is bound by residues Y316, R317, and A319. Residues E329 and E337 each contribute to the UDP-N-acetyl-alpha-D-glucosamine site. T343 contacts Mg(2+).

Belongs to the glycosyltransferase group 1 family. MshA subfamily. In terms of assembly, homodimer.

It carries out the reaction 1D-myo-inositol 3-phosphate + UDP-N-acetyl-alpha-D-glucosamine = 1D-myo-inositol 2-acetamido-2-deoxy-alpha-D-glucopyranoside 3-phosphate + UDP + H(+). Its function is as follows. Catalyzes the transfer of a N-acetyl-glucosamine moiety to 1D-myo-inositol 3-phosphate to produce 1D-myo-inositol 2-acetamido-2-deoxy-glucopyranoside 3-phosphate in the mycothiol biosynthesis pathway. This is D-inositol 3-phosphate glycosyltransferase from Geodermatophilus obscurus (strain ATCC 25078 / DSM 43160 / JCM 3152 / CCUG 61914 / KCC A-0152 / KCTC 9177 / NBRC 13315 / NRRL B-3577 / G-20).